We begin with the raw amino-acid sequence, 160 residues long: UPF0178 protein XC_1827 (160 aa).

The protein belongs to the UPF0178 family.

This chain is UPF0178 protein XC_1827, found in Xanthomonas campestris pv. campestris (strain 8004).